A 367-amino-acid polypeptide reads, in one-letter code: Histidinol-phosphate aminotransferase (367 aa).

N6-(pyridoxal phosphate)lysine is present on lysine 226.

The protein belongs to the class-II pyridoxal-phosphate-dependent aminotransferase family. Histidinol-phosphate aminotransferase subfamily. As to quaternary structure, homodimer. The cofactor is pyridoxal 5'-phosphate.

The catalysed reaction is L-histidinol phosphate + 2-oxoglutarate = 3-(imidazol-4-yl)-2-oxopropyl phosphate + L-glutamate. It participates in amino-acid biosynthesis; L-histidine biosynthesis; L-histidine from 5-phospho-alpha-D-ribose 1-diphosphate: step 7/9. The polypeptide is Histidinol-phosphate aminotransferase (Aliarcobacter butzleri (strain RM4018) (Arcobacter butzleri)).